The primary structure comprises 42 residues: Beta-defensin 6 (42 aa).

Q1 bears the Pyrrolidone carboxylic acid mark. 3 disulfide bridges follow: C9–C38, C16–C31, and C21–C39.

The protein belongs to the beta-defensin family. As to expression, neutrophilic granules.

Its subcellular location is the secreted. Functionally, has bactericidal activity. Active against E.coli ML35 and S.aureus 502A. The chain is Beta-defensin 6 (DEFB6) from Bos taurus (Bovine).